A 201-amino-acid polypeptide reads, in one-letter code: MRRIVLASNNPGKLAEFNALLAPLGLDVAPQGELGIPEAEEPHATFVENALAKARHASRLAGLPALADDSGICAHALGGAPGVYSARYAQLAGGPKSDAANNARLVRELAGHADRGAHYVCVLVYVRHADDPQPIIAEGSWFGEVIDAPRGDGGFGYDPHFLLPALGKTAAELSKAEKNAVSHRAQALAQLVERLRLFENA.

8-13 (SNNPGK) provides a ligand contact to substrate. The Mg(2+) site is built by E40 and D69. D69 acts as the Proton acceptor in catalysis. Substrate is bound by residues S70, 155–158 (FGYD), K178, and 183–184 (HR).

It belongs to the HAM1 NTPase family. In terms of assembly, homodimer. The cofactor is Mg(2+).

It carries out the reaction XTP + H2O = XMP + diphosphate + H(+). The enzyme catalyses dITP + H2O = dIMP + diphosphate + H(+). The catalysed reaction is ITP + H2O = IMP + diphosphate + H(+). In terms of biological role, pyrophosphatase that catalyzes the hydrolysis of nucleoside triphosphates to their monophosphate derivatives, with a high preference for the non-canonical purine nucleotides XTP (xanthosine triphosphate), dITP (deoxyinosine triphosphate) and ITP. Seems to function as a house-cleaning enzyme that removes non-canonical purine nucleotides from the nucleotide pool, thus preventing their incorporation into DNA/RNA and avoiding chromosomal lesions. The protein is dITP/XTP pyrophosphatase of Ralstonia nicotianae (strain ATCC BAA-1114 / GMI1000) (Ralstonia solanacearum).